Consider the following 315-residue polypeptide: Methionyl-tRNA formyltransferase (315 aa).

113-116 (SILP) lines the (6S)-5,6,7,8-tetrahydrofolate pocket.

Belongs to the Fmt family.

It catalyses the reaction L-methionyl-tRNA(fMet) + (6R)-10-formyltetrahydrofolate = N-formyl-L-methionyl-tRNA(fMet) + (6S)-5,6,7,8-tetrahydrofolate + H(+). In terms of biological role, attaches a formyl group to the free amino group of methionyl-tRNA(fMet). The formyl group appears to play a dual role in the initiator identity of N-formylmethionyl-tRNA by promoting its recognition by IF2 and preventing the misappropriation of this tRNA by the elongation apparatus. This is Methionyl-tRNA formyltransferase from Vibrio vulnificus (strain CMCP6).